Reading from the N-terminus, the 316-residue chain is Acetaldehyde dehydrogenase 3 (316 aa).

12-15 (SGNI) is a binding site for NAD(+). Cys-132 (acyl-thioester intermediate) is an active-site residue. Residues 163–171 (SAGPGTRAN) and Asn-289 each bind NAD(+).

It belongs to the acetaldehyde dehydrogenase family.

It catalyses the reaction acetaldehyde + NAD(+) + CoA = acetyl-CoA + NADH + H(+). The chain is Acetaldehyde dehydrogenase 3 (mhpF) from Comamonas testosteroni (Pseudomonas testosteroni).